Consider the following 302-residue polypeptide: AP-1 complex-associated regulatory protein (302 aa).

The residue at position 29 (S29) is a Phosphoserine. Residues 78–138 (DSIAEKQKDL…ERQRIVQQYH (61 aa)) are interaction with AP1G1. A coiled-coil region spans residues 80 to 138 (IAEKQKDLDKKIQKELALQEEKLRLEEEALYAAQREAARAAKQRKLLEQERQRIVQQYH). Over residues 188–206 (CDLMTKTKSTSGNDDSTSL) the composition is skewed to polar residues. The disordered stretch occupies residues 188 to 258 (CDLMTKTKST…TSASDDSNGL (71 aa)). The interval 199–215 (GNDDSTSLDLEWEDEEG) is sufficient for association with the Arp2/3 complex. The segment covering 221 to 233 (PMRERSKTEEDIL) has biased composition (basic and acidic residues). S226 is subject to Phosphoserine. Phosphothreonine is present on T228. Residues 242–255 (KKTGSNPTSASDDS) show a composition bias toward polar residues.

In terms of assembly, interacts (via coiled-coil domain) with AP1G1 (via GAE domain). Interacts with KIF5B. Associates with the Arp2/3 complex. Post-translationally, palmitoylated.

Its subcellular location is the golgi apparatus. It is found in the trans-Golgi network. The protein resides in the late endosome. The protein localises to the early endosome. In terms of biological role, necessary for adaptor protein complex 1 (AP-1)-dependent transport between the trans-Golgi network and endosomes. Regulates the membrane association of AP1G1/gamma1-adaptin, one of the subunits of the AP-1 adaptor complex. The direct interaction with AP1G1/gamma1-adaptin attenuates the release of the AP-1 complex from membranes. Regulates endosomal membrane traffic via association with AP-1 and KIF5B thus linking kinesin-based plus-end-directed microtubular transport to AP-1-dependent membrane traffic. May act as effector of AP-1 in calcium-induced endo-lysosome secretion. Inhibits Arp2/3 complex function; negatively regulates cell spreading, size and motility via intracellular sequestration of the Arp2/3 complex. The chain is AP-1 complex-associated regulatory protein (AP1AR) from Homo sapiens (Human).